The chain runs to 457 residues: Cysteine--tRNA ligase (457 aa).

Cys28 provides a ligand contact to Zn(2+). A 'HIGH' region motif is present at residues 30-40 (PTVYDTAHIGN). Zn(2+) is bound by residues Cys212, His237, and Glu241. A 'KMSKS' region motif is present at residues 270–274 (KMSKS). Lys273 is an ATP binding site.

Belongs to the class-I aminoacyl-tRNA synthetase family. In terms of assembly, monomer. Zn(2+) is required as a cofactor.

It localises to the cytoplasm. The enzyme catalyses tRNA(Cys) + L-cysteine + ATP = L-cysteinyl-tRNA(Cys) + AMP + diphosphate. The sequence is that of Cysteine--tRNA ligase from Wolbachia sp. subsp. Drosophila simulans (strain wRi).